Reading from the N-terminus, the 118-residue chain is MTTLNQAHCEACRADAPQVSDEELPVLLKQIPDWNIEVRDGVMQLEKVFLFKNFKFALAFTNAMGEISEAEGHHPGLLTEWGKVTVTWWSHSIKGLHRNDFIMAARTDEVAKDAEGRK.

Belongs to the pterin-4-alpha-carbinolamine dehydratase family.

The enzyme catalyses (4aS,6R)-4a-hydroxy-L-erythro-5,6,7,8-tetrahydrobiopterin = (6R)-L-erythro-6,7-dihydrobiopterin + H2O. The sequence is that of Putative pterin-4-alpha-carbinolamine dehydratase from Pseudomonas fluorescens (strain SBW25).